We begin with the raw amino-acid sequence, 81 residues long: MRKLALVPIQFYRYAMSPLMASHCRFYPSCSCYAYEAIENHGLLRGGWLSIRRLGRCHPWNPGGYDPVPAVPTSRSSSMAE.

The protein belongs to the UPF0161 family.

The protein resides in the cell inner membrane. Functionally, could be involved in insertion of integral membrane proteins into the membrane. The protein is Putative membrane protein insertion efficiency factor of Pseudomonas savastanoi pv. phaseolicola (strain 1448A / Race 6) (Pseudomonas syringae pv. phaseolicola (strain 1448A / Race 6)).